The following is a 288-amino-acid chain: uncharacterized protein (288 aa).

This is an uncharacterized protein from Ictaluridae (bullhead catfishes).